Consider the following 391-residue polypeptide: Elongation factor Tu (391 aa).

A tr-type G domain is found at 10 to 201 (KPHVNIGTIG…QVDAYIPTPV (192 aa)). Residues 19–26 (GHVDHGKT) form a G1 region. Position 19–26 (19–26 (GHVDHGKT)) interacts with GTP. Mg(2+) is bound at residue threonine 26. The interval 55–59 (GITIS) is G2. The G3 stretch occupies residues 76-79 (DCPG). Residues 76-80 (DCPGH) and 131-134 (NKVD) contribute to the GTP site. Positions 131–134 (NKVD) are G4. The tract at residues 169 to 171 (SAL) is G5.

It belongs to the TRAFAC class translation factor GTPase superfamily. Classic translation factor GTPase family. EF-Tu/EF-1A subfamily. As to quaternary structure, monomer.

It is found in the cytoplasm. It catalyses the reaction GTP + H2O = GDP + phosphate + H(+). GTP hydrolase that promotes the GTP-dependent binding of aminoacyl-tRNA to the A-site of ribosomes during protein biosynthesis. The polypeptide is Elongation factor Tu (Mesorhizobium japonicum (strain LMG 29417 / CECT 9101 / MAFF 303099) (Mesorhizobium loti (strain MAFF 303099))).